The following is a 471-amino-acid chain: Argininosuccinate lyase (471 aa).

It belongs to the lyase 1 family. Argininosuccinate lyase subfamily.

The protein localises to the cytoplasm. It carries out the reaction 2-(N(omega)-L-arginino)succinate = fumarate + L-arginine. It functions in the pathway amino-acid biosynthesis; L-arginine biosynthesis; L-arginine from L-ornithine and carbamoyl phosphate: step 3/3. The polypeptide is Argininosuccinate lyase (Parasynechococcus marenigrum (strain WH8102)).